Here is an 85-residue protein sequence, read N- to C-terminus: V-type proton ATPase subunit f (85 aa).

Residues 1–10 (MRPVVSTGKA) are Lumenal-facing. Residues 11-31 (WCCTVLSAFGVVILSVIAHLF) form a helical membrane-spanning segment. The Cytoplasmic portion of the chain corresponds to 32-54 (NTNHESFVGSINDPEDGPAVAHT). The helical transmembrane segment at 55–75 (VYLAALVYLVFFVFCGFQVYL) threads the bilayer. The Lumenal segment spans residues 76–85 (ARRKPSIELR).

As to quaternary structure, V-ATPase is a heteromultimeric enzyme composed of a peripheral catalytic V1 complex (components A to H) attached to an integral membrane V0 proton pore complex (components: a, c, c', c'', d, e, f and VOA1).

The protein resides in the endoplasmic reticulum membrane. Its subcellular location is the vacuole membrane. In terms of biological role, accessory component of the V0 complex of vacuolar(H+)-ATPase (V-ATPase), a multisubunit enzyme composed of a peripheral complex (V1) that hydrolyzes ATP and a membrane integral complex (V0) that translocates protons. V-ATPase is responsible for acidifying and maintaining the pH of intracellular compartments. The sequence is that of V-type proton ATPase subunit f from Saccharomyces cerevisiae (strain ATCC 204508 / S288c) (Baker's yeast).